The chain runs to 82 residues: Small ribosomal subunit protein uS17 (82 aa).

It belongs to the universal ribosomal protein uS17 family. Part of the 30S ribosomal subunit.

Functionally, one of the primary rRNA binding proteins, it binds specifically to the 5'-end of 16S ribosomal RNA. The protein is Small ribosomal subunit protein uS17 of Bradyrhizobium diazoefficiens (strain JCM 10833 / BCRC 13528 / IAM 13628 / NBRC 14792 / USDA 110).